We begin with the raw amino-acid sequence, 294 residues long: Protease HtpX (294 aa).

A run of 2 helical transmembrane segments spans residues 4 to 24 and 33 to 53; these read ILLF…ILFI and FGLI…SLLL. Histidine 139 lines the Zn(2+) pocket. The active site involves glutamate 140. A Zn(2+)-binding site is contributed by histidine 143. Helical transmembrane passes span 147-167 and 197-217; these read GDMI…IFLS and FFIS…ITFW. Glutamate 223 provides a ligand contact to Zn(2+).

Belongs to the peptidase M48B family. It depends on Zn(2+) as a cofactor.

The protein resides in the cell membrane. This is Protease HtpX from Wigglesworthia glossinidia brevipalpis.